The primary structure comprises 351 residues: Thiamine-phosphate synthase (351 aa).

The tract at residues 1–128 (MKNPNIIQPE…SKIASEIRYE (128 aa)) is unknown. Positions 129–351 (IYTLEIEILN…IIIKELSHEN (223 aa)) are thiamine-phosphate synthase. 4-amino-2-methyl-5-(diphosphooxymethyl)pyrimidine contacts are provided by residues 180–184 (QHRFK) and Asn212. Residues Asn213 and Asp232 each contribute to the Mg(2+) site. Residue Ser251 participates in 4-amino-2-methyl-5-(diphosphooxymethyl)pyrimidine binding. 277-279 (TLT) is a binding site for 2-[(2R,5Z)-2-carboxy-4-methylthiazol-5(2H)-ylidene]ethyl phosphate. Lys280 serves as a coordination point for 4-amino-2-methyl-5-(diphosphooxymethyl)pyrimidine. 2-[(2R,5Z)-2-carboxy-4-methylthiazol-5(2H)-ylidene]ethyl phosphate is bound by residues Gly307 and 327–328 (VS).

The protein belongs to the thiamine-phosphate synthase family.

It catalyses the reaction 2-[(2R,5Z)-2-carboxy-4-methylthiazol-5(2H)-ylidene]ethyl phosphate + 4-amino-2-methyl-5-(diphosphooxymethyl)pyrimidine + 2 H(+) = thiamine phosphate + CO2 + diphosphate. The catalysed reaction is 2-(2-carboxy-4-methylthiazol-5-yl)ethyl phosphate + 4-amino-2-methyl-5-(diphosphooxymethyl)pyrimidine + 2 H(+) = thiamine phosphate + CO2 + diphosphate. It carries out the reaction 4-methyl-5-(2-phosphooxyethyl)-thiazole + 4-amino-2-methyl-5-(diphosphooxymethyl)pyrimidine + H(+) = thiamine phosphate + diphosphate. Its pathway is cofactor biosynthesis; thiamine diphosphate biosynthesis; thiamine phosphate from 4-amino-2-methyl-5-diphosphomethylpyrimidine and 4-methyl-5-(2-phosphoethyl)-thiazole: step 1/1. Functionally, condenses 4-methyl-5-(beta-hydroxyethyl)thiazole monophosphate (THZ-P) and 2-methyl-4-amino-5-hydroxymethyl pyrimidine pyrophosphate (HMP-PP) to form thiamine monophosphate (TMP). The chain is Thiamine-phosphate synthase from Prochlorococcus marinus subsp. pastoris (strain CCMP1986 / NIES-2087 / MED4).